Here is a 513-residue protein sequence, read N- to C-terminus: Ankyrin repeat-containing protein YIL001W (513 aa).

2 ANK repeats span residues 8 to 37 (KNFE…NVNS) and 41 to 70 (FDNS…VCDR). BTB domains follow at residues 122–179 (RDIT…KFLY) and 274–360 (PDVQ…DIPW).

In Saccharomyces cerevisiae (strain ATCC 204508 / S288c) (Baker's yeast), this protein is Ankyrin repeat-containing protein YIL001W.